The following is a 279-amino-acid chain: Acyl-coenzyme A thioesterase MBLAC2 (279 aa).

Position 2 is an N-acetylserine (Ser-2). Residues His-83, His-85, Asp-87, His-88, His-170, Asp-189, and His-231 each contribute to the Zn(2+) site. Cys-254 carries the S-palmitoyl cysteine lipid modification.

The protein belongs to the metallo-beta-lactamase superfamily. Glyoxalase II family. Requires Zn(2+) as cofactor. In terms of processing, palmitoylated on Cys-254 by ZDHHC20.

The protein localises to the endoplasmic reticulum membrane. It localises to the cell membrane. The enzyme catalyses hexadecanoyl-CoA + H2O = hexadecanoate + CoA + H(+). The catalysed reaction is dodecanoyl-CoA + H2O = dodecanoate + CoA + H(+). It carries out the reaction tetradecanoyl-CoA + H2O = tetradecanoate + CoA + H(+). It catalyses the reaction octadecanoyl-CoA + H2O = octadecanoate + CoA + H(+). The enzyme catalyses a beta-lactam + H2O = a substituted beta-amino acid. Acyl-CoA thioesterases are a group of enzymes that catalyze the hydrolysis of acyl-CoAs to the free fatty acid and coenzyme A (CoASH), providing the potential to regulate intracellular levels of acyl-CoAs, free fatty acids and CoASH. Has an acyl-CoA thioesterase activity towards the long chain fatty acyl-CoA thioester palmitoyl-CoA (hexadecanoyl-CoA; C16:0-CoA). Displays a substrate preference for fatty acyl-CoAs with chain-lengths C12-C18. This Bos taurus (Bovine) protein is Acyl-coenzyme A thioesterase MBLAC2 (MBLAC2).